Here is a 215-residue protein sequence, read N- to C-terminus: MPDTARDRLADARVYLCTDARRRQGDLAEFLDAALAGGVDIVQLRDKGMEAAEELEHLQVFADACRRHGKLLAVNDRADVAHAVDSDVLHLGQGDLPVPAARAILGADVLIGRSTHAEAEAEAAAVQEGVDYFCTGPCWPTPTKPGRHAPGLDLVRHTAALGTDRPWFAIGGIDLGNLDEVLEAGARRVVVVRAITEADDPKAAAEEFAKRLRHA.

4-amino-2-methyl-5-(diphosphooxymethyl)pyrimidine is bound by residues 43–47 and asparagine 75; that span reads QLRDK. Mg(2+) is bound by residues aspartate 76 and aspartate 95. Serine 114 contributes to the 4-amino-2-methyl-5-(diphosphooxymethyl)pyrimidine binding site. 141–143 provides a ligand contact to 2-[(2R,5Z)-2-carboxy-4-methylthiazol-5(2H)-ylidene]ethyl phosphate; sequence TPT. Lysine 144 is a 4-amino-2-methyl-5-(diphosphooxymethyl)pyrimidine binding site. Glycine 172 contacts 2-[(2R,5Z)-2-carboxy-4-methylthiazol-5(2H)-ylidene]ethyl phosphate.

The protein belongs to the thiamine-phosphate synthase family. The cofactor is Mg(2+).

The enzyme catalyses 2-[(2R,5Z)-2-carboxy-4-methylthiazol-5(2H)-ylidene]ethyl phosphate + 4-amino-2-methyl-5-(diphosphooxymethyl)pyrimidine + 2 H(+) = thiamine phosphate + CO2 + diphosphate. It carries out the reaction 2-(2-carboxy-4-methylthiazol-5-yl)ethyl phosphate + 4-amino-2-methyl-5-(diphosphooxymethyl)pyrimidine + 2 H(+) = thiamine phosphate + CO2 + diphosphate. It catalyses the reaction 4-methyl-5-(2-phosphooxyethyl)-thiazole + 4-amino-2-methyl-5-(diphosphooxymethyl)pyrimidine + H(+) = thiamine phosphate + diphosphate. It participates in cofactor biosynthesis; thiamine diphosphate biosynthesis; thiamine phosphate from 4-amino-2-methyl-5-diphosphomethylpyrimidine and 4-methyl-5-(2-phosphoethyl)-thiazole: step 1/1. In terms of biological role, condenses 4-methyl-5-(beta-hydroxyethyl)thiazole monophosphate (THZ-P) and 2-methyl-4-amino-5-hydroxymethyl pyrimidine pyrophosphate (HMP-PP) to form thiamine monophosphate (TMP). This is Thiamine-phosphate synthase from Streptomyces avermitilis (strain ATCC 31267 / DSM 46492 / JCM 5070 / NBRC 14893 / NCIMB 12804 / NRRL 8165 / MA-4680).